We begin with the raw amino-acid sequence, 547 residues long: Chaperonin GroEL (547 aa).

ATP-binding positions include T30–P33, K51, D87–T91, G415, N479–A481, and D495.

This sequence belongs to the chaperonin (HSP60) family. Forms a cylinder of 14 subunits composed of two heptameric rings stacked back-to-back. Interacts with the co-chaperonin GroES.

The protein resides in the cytoplasm. The enzyme catalyses ATP + H2O + a folded polypeptide = ADP + phosphate + an unfolded polypeptide.. In terms of biological role, together with its co-chaperonin GroES, plays an essential role in assisting protein folding. The GroEL-GroES system forms a nano-cage that allows encapsulation of the non-native substrate proteins and provides a physical environment optimized to promote and accelerate protein folding. The sequence is that of Chaperonin GroEL from Cupriavidus metallidurans (strain ATCC 43123 / DSM 2839 / NBRC 102507 / CH34) (Ralstonia metallidurans).